We begin with the raw amino-acid sequence, 287 residues long: Ribosomal RNA small subunit methyltransferase A (287 aa).

The S-adenosyl-L-methionine site is built by N28, L30, G55, E77, D103, and N123.

It belongs to the class I-like SAM-binding methyltransferase superfamily. rRNA adenine N(6)-methyltransferase family. RsmA subfamily.

Its subcellular location is the cytoplasm. It catalyses the reaction adenosine(1518)/adenosine(1519) in 16S rRNA + 4 S-adenosyl-L-methionine = N(6)-dimethyladenosine(1518)/N(6)-dimethyladenosine(1519) in 16S rRNA + 4 S-adenosyl-L-homocysteine + 4 H(+). Its function is as follows. Specifically dimethylates two adjacent adenosines (A1518 and A1519) in the loop of a conserved hairpin near the 3'-end of 16S rRNA in the 30S particle. May play a critical role in biogenesis of 30S subunits. The protein is Ribosomal RNA small subunit methyltransferase A of Rhodopseudomonas palustris (strain BisA53).